We begin with the raw amino-acid sequence, 147 residues long: Hemoglobin subunit beta (147 aa).

At Val-2 the chain carries N-acetylvaline. The Globin domain maps to 3-147; that stretch reads HLTPEEKNAV…VANALAHKYH (145 aa). The residue at position 13 (Thr-13) is a Phosphothreonine. Ser-45 carries the post-translational modification Phosphoserine. At Lys-60 the chain carries N6-acetyllysine. His-64 is a binding site for heme b. Lys-83 carries the N6-acetyllysine modification. His-93 is a binding site for heme b. S-nitrosocysteine is present on Cys-94. Lys-145 carries the post-translational modification N6-acetyllysine.

It belongs to the globin family. As to quaternary structure, heterotetramer of two alpha chains and two beta chains. Red blood cells.

Its function is as follows. Involved in oxygen transport from the lung to the various peripheral tissues. This chain is Hemoglobin subunit beta (HBB), found in Macaca fascicularis (Crab-eating macaque).